The following is a 478-amino-acid chain: MARKTLRARRFFSLIFPFFFITSVYAEQTPESAKTVTVEAKNEMFAPQHPDQYQSWKATSEQSAREDALAEDPRLVILWAGYPFSRDYNKPRGHAYAVTDVRETLRTGAPKTAEDGPLPMACWSCKSPDVARLIQQEGEDGYFHGKWARGGPEIVNDLGCADCHNTASDDFAQGKPALTLSRPYAERAMEAIGKPFDKAGRFDQQSMVCGQCHVEYYFDGKNKAVKFPWDEGMKVENMEQYYDAIAFSDWTNSLSKTPMLKAQHPEYETWSAGIHGKNNVTCIDCHMPKVQNAEGKLYTDHKIGNPFDNFAQTCANCHTQDKASLQKVVAERKQAIHDLKIKVEDQLVHAHFEAKAAWDAGATDAEMKPILNDIRHAQWRWDLAIASHGIHMHAPEEGLRMLGSAMDKAADARTKLARLLATKGITHEIPLPDISTKEKAQKAIGLNMQQINAEKQDFLKTVVPQWEDQARKNGLLSQ.

An N-terminal signal peptide occupies residues 1–26 (MARKTLRARRFFSLIFPFFFITSVYA). His94 contributes to the heme c binding site. Heme is bound by residues Cys122, Cys125, and Lys126. Residues Cys160, Cys163, His164, Cys209, Cys212, and His213 each coordinate heme c. Ca(2+)-binding residues include Glu215, Tyr216, Lys261, and Gln263. Tyr216 is a binding site for substrate. His264 is a binding site for substrate. Heme c contacts are provided by His275, Cys282, Cys285, His286, His301, Cys314, Cys317, His318, and His393.

It belongs to the cytochrome c-552 family. Requires Ca(2+) as cofactor. It depends on heme c as a cofactor.

The protein localises to the periplasm. It carries out the reaction 6 Fe(III)-[cytochrome c] + NH4(+) + 2 H2O = 6 Fe(II)-[cytochrome c] + nitrite + 8 H(+). Its pathway is nitrogen metabolism; nitrate reduction (assimilation). In terms of biological role, catalyzes the reduction of nitrite to ammonia, consuming six electrons in the process. The protein is Cytochrome c-552 of Salmonella gallinarum (strain 287/91 / NCTC 13346).